Reading from the N-terminus, the 475-residue chain is Ribulose bisphosphate carboxylase large chain (475 aa).

The propeptide occupies 1 to 2 (MA). P3 bears the N-acetylproline mark. Residue K14 is modified to N6,N6,N6-trimethyllysine. Substrate contacts are provided by N123 and T173. The active-site Proton acceptor is K175. A substrate-binding site is contributed by K177. Mg(2+) contacts are provided by K201, D203, and E204. K201 carries the N6-carboxylysine modification. Residue H294 is the Proton acceptor of the active site. Residues R295, H327, and S379 each contribute to the substrate site.

Belongs to the RuBisCO large chain family. Type I subfamily. As to quaternary structure, heterohexadecamer of 8 large chains and 8 small chains; disulfide-linked. The disulfide link is formed within the large subunit homodimers. It depends on Mg(2+) as a cofactor. The disulfide bond which can form in the large chain dimeric partners within the hexadecamer appears to be associated with oxidative stress and protein turnover.

Its subcellular location is the plastid. It localises to the chloroplast. The enzyme catalyses 2 (2R)-3-phosphoglycerate + 2 H(+) = D-ribulose 1,5-bisphosphate + CO2 + H2O. It catalyses the reaction D-ribulose 1,5-bisphosphate + O2 = 2-phosphoglycolate + (2R)-3-phosphoglycerate + 2 H(+). Functionally, ruBisCO catalyzes two reactions: the carboxylation of D-ribulose 1,5-bisphosphate, the primary event in carbon dioxide fixation, as well as the oxidative fragmentation of the pentose substrate in the photorespiration process. Both reactions occur simultaneously and in competition at the same active site. The chain is Ribulose bisphosphate carboxylase large chain from Tupiella akineta (Green alga).